The chain runs to 95 residues: Large ribosomal subunit protein uL22c (95 aa).

The protein belongs to the universal ribosomal protein uL22 family. As to quaternary structure, part of the 50S ribosomal subunit.

Its subcellular location is the plastid. The protein localises to the chloroplast. In terms of biological role, this protein binds specifically to 23S rRNA. Functionally, the globular domain of the protein is located near the polypeptide exit tunnel on the outside of the subunit, while an extended beta-hairpin is found that lines the wall of the exit tunnel in the center of the 70S ribosome. The chain is Large ribosomal subunit protein uL22c (rpl22) from Cyanidioschyzon merolae (strain NIES-3377 / 10D) (Unicellular red alga).